Here is a 53-residue protein sequence, read N- to C-terminus: UPF0391 membrane protein msr4317 (53 aa).

Transmembrane regions (helical) follow at residues 4–24 (WIII…PALA) and 33–53 (ILIG…FAVT).

Belongs to the UPF0391 family.

The protein localises to the cell membrane. This Mesorhizobium japonicum (strain LMG 29417 / CECT 9101 / MAFF 303099) (Mesorhizobium loti (strain MAFF 303099)) protein is UPF0391 membrane protein msr4317.